A 361-amino-acid chain; its full sequence is 3-dehydroquinate synthase (361 aa).

The protein belongs to the archaeal-type DHQ synthase family.

It carries out the reaction 2-amino-2,3,7-trideoxy-D-lyxo-hept-6-ulosonate + NAD(+) + H2O = 3-dehydroquinate + NH4(+) + NADH + H(+). In terms of biological role, catalyzes the oxidative deamination and cyclization of 2-amino-3,7-dideoxy-D-threo-hept-6-ulosonic acid (ADH) to yield 3-dehydroquinate (DHQ), which is fed into the canonical shikimic pathway of aromatic amino acid biosynthesis. The sequence is that of 3-dehydroquinate synthase from Methanococcus vannielii (strain ATCC 35089 / DSM 1224 / JCM 13029 / OCM 148 / SB).